A 1198-amino-acid polypeptide reads, in one-letter code: Regulator of G-protein signaling 3 (1198 aa).

Residues 137–256 enclose the C2 domain; the sequence is GAGQLRLSID…TPDKEISGWY (120 aa). The 78-residue stretch at 299–376 folds into the PDZ domain; the sequence is KITIPRGKDG…EIILLVWRMV (78 aa). Omega-N-methylarginine is present on R448. The interval 669–933 is disordered; the sequence is QQLAASPPDS…GAEGGLSLRV (265 aa). S674 is subject to Phosphoserine. Basic and acidic residues predominate over residues 679–697; the sequence is KMFETEADEKREMALEEGK. The segment covering 739–751 has biased composition (polar residues); that stretch reads EPLSSKDSATSEG. A compositionally biased stretch (pro residues) spans 753–773; it reads PPGPDAPPSKDVPPCQEPPPA. The span at 877-906 shows a compositional bias: acidic residues; it reads GDEEDAEEAEEVEEGEEGEEDEDEDTSDDN. Residues 907-917 are compositionally biased toward basic and acidic residues; sequence YGERSEAKRSS. Residues S943, S946, S978, and S1007 each carry the phosphoserine modification. Disordered regions lie at residues 1007-1026 and 1032-1056; these read SGAD…KSKN and KNKL…ADKM. The region spanning 1073-1198 is the RGS domain; the sequence is SLEKLLVHKY…INQKKMSPPL (126 aa).

Binds EFNB1 and EFNB2. Binds the GNB1-GNG2 heterodimer. In terms of processing, phosphorylated by cyclic GMP-dependent protein kinase. ISGylated.

It localises to the cytoplasm. The protein localises to the nucleus. The protein resides in the cell membrane. In terms of biological role, down-regulates signaling from heterotrimeric G-proteins by increasing the GTPase activity of the alpha subunits, thereby driving them into their inactive GDP-bound form. Down-regulates G-protein-mediated release of inositol phosphates and activation of MAP kinases. This Homo sapiens (Human) protein is Regulator of G-protein signaling 3 (RGS3).